We begin with the raw amino-acid sequence, 131 residues long: Fumarate reductase subunit C (131 aa).

3 consecutive transmembrane segments (helical) span residues 30 to 50 (EGTA…LFAL), 63 to 83 (FLQN…ALLH), and 109 to 129 (IIKS…FVAL).

It belongs to the FrdC family. Part of an enzyme complex containing four subunits: a flavoprotein (FrdA), an iron-sulfur protein (FrdB), and two hydrophobic anchor proteins (FrdC and FrdD).

The protein resides in the cell inner membrane. In terms of biological role, two distinct, membrane-bound, FAD-containing enzymes are responsible for the catalysis of fumarate and succinate interconversion; fumarate reductase is used in anaerobic growth, and succinate dehydrogenase is used in aerobic growth. Anchors the catalytic components of the fumarate reductase complex to the cell inner membrane, binds quinones. This is Fumarate reductase subunit C from Shigella boydii serotype 18 (strain CDC 3083-94 / BS512).